A 187-amino-acid chain; its full sequence is Prepilin peptidase-dependent protein B (187 aa).

Positions 1–7 (MPVKEQG) are cleaved as a propeptide — leader sequence. Phenylalanine 8 is subject to N-methylphenylalanine. The helical transmembrane segment at 8–28 (FSLLEVLIAMAISSVLLLGAA) threads the bilayer.

It is found in the membrane. In terms of biological role, not yet known. The chain is Prepilin peptidase-dependent protein B (ppdB) from Escherichia coli (strain K12).